The primary structure comprises 463 residues: Elongation factor 1-alpha (463 aa).

A tr-type G domain is found at K5–T242. The tract at residues G14–S21 is G1. Position 14 to 21 (G14 to S21) interacts with GTP. The G2 stretch occupies residues G70–D74. Positions D91–G94 are G3. GTP-binding positions include D91–H95 and N153–D156. A G4 region spans residues N153 to D156. The tract at residues S194–W196 is G5. 5-glutamyl glycerylphosphorylethanolamine is present on residues E301 and E374.

The protein belongs to the TRAFAC class translation factor GTPase superfamily. Classic translation factor GTPase family. EF-Tu/EF-1A subfamily.

The protein resides in the cytoplasm. Its function is as follows. This protein promotes the GTP-dependent binding of aminoacyl-tRNA to the A-site of ribosomes during protein biosynthesis. The polypeptide is Elongation factor 1-alpha (Bombyx mori (Silk moth)).